The primary structure comprises 173 residues: Thiol-disulfide oxidoreductase ResA (173 aa).

A helical; Signal-anchor for type II membrane protein transmembrane segment spans residues 10-29; that stretch reads VIILLILSGAVGFTLYQGFF. A Thioredoxin domain is found at 35-173; that stretch reads MQIGKEAPNF…LEGYLKKITP (139 aa). Cysteines 73 and 76 form a disulfide.

This sequence belongs to the thioredoxin family. ResA subfamily.

Its subcellular location is the cell membrane. The protein operates within protein modification; cytochrome c assembly. Functionally, thiol-disulfide oxidoreductase which is required in disulfide reduction during c-type cytochrome synthesis. May accept reducing equivalents from CcdA, leading to breakage of disulfide bonds in apocytochrome c; following this reduction heme can be covalently attached. The chain is Thiol-disulfide oxidoreductase ResA from Bacillus thuringiensis (strain Al Hakam).